We begin with the raw amino-acid sequence, 102 residues long: Small ribosomal subunit protein uS14m (102 aa).

The protein belongs to the universal ribosomal protein uS14 family.

The protein localises to the mitochondrion. The protein is Small ribosomal subunit protein uS14m (RPS14) of Paramecium tetraurelia.